Here is a 490-residue protein sequence, read N- to C-terminus: Aspartyl/glutamyl-tRNA(Asn/Gln) amidotransferase subunit B (490 aa).

This sequence belongs to the GatB/GatE family. GatB subfamily. As to quaternary structure, heterotrimer of A, B and C subunits.

The catalysed reaction is L-glutamyl-tRNA(Gln) + L-glutamine + ATP + H2O = L-glutaminyl-tRNA(Gln) + L-glutamate + ADP + phosphate + H(+). It carries out the reaction L-aspartyl-tRNA(Asn) + L-glutamine + ATP + H2O = L-asparaginyl-tRNA(Asn) + L-glutamate + ADP + phosphate + 2 H(+). Allows the formation of correctly charged Asn-tRNA(Asn) or Gln-tRNA(Gln) through the transamidation of misacylated Asp-tRNA(Asn) or Glu-tRNA(Gln) in organisms which lack either or both of asparaginyl-tRNA or glutaminyl-tRNA synthetases. The reaction takes place in the presence of glutamine and ATP through an activated phospho-Asp-tRNA(Asn) or phospho-Glu-tRNA(Gln). The polypeptide is Aspartyl/glutamyl-tRNA(Asn/Gln) amidotransferase subunit B (Burkholderia thailandensis (strain ATCC 700388 / DSM 13276 / CCUG 48851 / CIP 106301 / E264)).